The sequence spans 350 residues: Heat-inducible transcription repressor HrcA (350 aa).

It belongs to the HrcA family.

In terms of biological role, negative regulator of class I heat shock genes (grpE-dnaK-dnaJ and groELS operons). Prevents heat-shock induction of these operons. The protein is Heat-inducible transcription repressor HrcA of Xanthomonas euvesicatoria pv. vesicatoria (strain 85-10) (Xanthomonas campestris pv. vesicatoria).